Consider the following 255-residue polypeptide: Proteasome subunit alpha (255 aa).

Belongs to the peptidase T1A family. The 20S proteasome core is composed of 14 alpha and 14 beta subunits that assemble into four stacked heptameric rings, resulting in a barrel-shaped structure. The two inner rings, each composed of seven catalytic beta subunits, are sandwiched by two outer rings, each composed of seven alpha subunits. The catalytic chamber with the active sites is on the inside of the barrel. Has a gated structure, the ends of the cylinder being occluded by the N-termini of the alpha-subunits. Is capped at one or both ends by the proteasome regulatory ATPase, PAN.

Its subcellular location is the cytoplasm. With respect to regulation, the formation of the proteasomal ATPase PAN-20S proteasome complex, via the docking of the C-termini of PAN into the intersubunit pockets in the alpha-rings, triggers opening of the gate for substrate entry. Interconversion between the open-gate and close-gate conformations leads to a dynamic regulation of the 20S proteasome proteolysis activity. Its function is as follows. Component of the proteasome core, a large protease complex with broad specificity involved in protein degradation. This chain is Proteasome subunit alpha, found in Natronomonas pharaonis (strain ATCC 35678 / DSM 2160 / CIP 103997 / JCM 8858 / NBRC 14720 / NCIMB 2260 / Gabara) (Halobacterium pharaonis).